The sequence spans 233 residues: 7-cyano-7-deazaguanine synthase (233 aa).

Leucine 7 to serine 17 lines the ATP pocket. Cysteine 195, cysteine 206, cysteine 209, and cysteine 212 together coordinate Zn(2+).

This sequence belongs to the QueC family. The cofactor is Zn(2+).

It carries out the reaction 7-carboxy-7-deazaguanine + NH4(+) + ATP = 7-cyano-7-deazaguanine + ADP + phosphate + H2O + H(+). The protein operates within purine metabolism; 7-cyano-7-deazaguanine biosynthesis. In terms of biological role, catalyzes the ATP-dependent conversion of 7-carboxy-7-deazaguanine (CDG) to 7-cyano-7-deazaguanine (preQ(0)). This is 7-cyano-7-deazaguanine synthase from Methanococcus maripaludis (strain DSM 14266 / JCM 13030 / NBRC 101832 / S2 / LL).